A 223-amino-acid polypeptide reads, in one-letter code: Noggin (223 aa).

Residues 1-26 (MDHSQCLVTIYAAAVLLGLRLQQGSC) form the signal peptide. N-linked (GlcNAc...) asparagine glycosylation occurs at asparagine 61. Cystine bridges form between cysteine 146/cysteine 183, cysteine 169/cysteine 219, cysteine 175/cysteine 221, and cysteine 198/cysteine 206.

Belongs to the noggin family. In terms of assembly, homodimer.

The protein localises to the secreted. In terms of biological role, inhibitor of bone morphogenetic proteins (BMP) signaling. Controls somitogenesis by sequestering the BMP-4 activity which in turn differentiates distinct subtypes of the mesoderm along the mediolateral axis. The protein is Noggin (NOG) of Gallus gallus (Chicken).